Here is a 348-residue protein sequence, read N- to C-terminus: GTPase Obg 1 (348 aa).

In terms of domain architecture, Obg spans 1-159 (MSFVDEAKIH…HCVLLKLKIV (159 aa)). Positions 160 to 329 (SDVGIIGMPN…LHAQVKKAVV (170 aa)) constitute an OBG-type G domain. Residues 166–173 (GMPNAGKS), 191–195 (FTTLE), 212–215 (DIPG), 279–282 (NKCD), and 310–312 (GDE) each bind GTP. Mg(2+) contacts are provided by S173 and T193.

This sequence belongs to the TRAFAC class OBG-HflX-like GTPase superfamily. OBG GTPase family. As to quaternary structure, monomer. Mg(2+) is required as a cofactor.

The protein localises to the cytoplasm. Functionally, an essential GTPase which binds GTP, GDP and possibly (p)ppGpp with moderate affinity, with high nucleotide exchange rates and a fairly low GTP hydrolysis rate. Plays a role in control of the cell cycle, stress response, ribosome biogenesis and in those bacteria that undergo differentiation, in morphogenesis control. The chain is GTPase Obg 1 from Anaplasma marginale (strain St. Maries).